The sequence spans 644 residues: Transcription factor cep-1 (644 aa).

A DNA-binding region spans residues 223 to 418; sequence EKWMEIDVLK…NFCEREDAKQ (196 aa). Positions 307, 310, 361, and 365 each coordinate Zn(2+). Residues 528-555 form a required for tertiary structure stability of the protein region; sequence TNYSFRTLTLSTAEYTKVVEFLAREAKV.

Belongs to the p53 family. Homodimer. Interacts (via C-terminus domain) with prmt-5; not methylated by prmt-5. Interacts with cbp-1 (via HAT domain); cep-1 transcriptional activity may be inhibited by interaction with methylated cbp-1. Component of a complex that contains prmt-5 and cbp-1. Interacts with ape-1; the interaction inhibits pro-apoptotic activity of cep-1. Zn(2+) is required as a cofactor. Phosphorylated in response to IR-induced DNA damage which is thought to be mediated by akt-1. As to expression, expressed in pharyngeal muscle and neurons.

It is found in the nucleus. Functionally, transcriptional activator that binds the same DNA consensus sequence as p53. Has a role in normal development to ensure proper meiotic chromosome segregation. Promotes apoptosis under conditions of cellular and genotoxic stress in response to DNA damage, hypoxia, or starvation. Regulates germline apoptosis in response to DNA damage. Its pro-apoptotic activity is inhibited when bound to ape-1 in vitro. Plays a role in cell cycle arrest in the germline in response to DNA damage by UV-C light. However, not required for survival in response to DNA damage induced by UV-C light, indicating that it is unlikely to be involved in DNA repair. Required for induction of ced-13 in response to DNA damage. Regulates DNA damage-induced apoptosis by inducing transcription of the programmed cell death activator egl-1. Regulates germline proliferation by activating phg-1. Modulates lifespan. In Caenorhabditis elegans, this protein is Transcription factor cep-1.